The sequence spans 39 residues: Cytochrome b559 subunit beta (39 aa).

A helical transmembrane segment spans residues 14–30; that stretch reads WLAVHGLAVPTVFFLGS. His18 serves as a coordination point for heme.

This sequence belongs to the PsbE/PsbF family. As to quaternary structure, heterodimer of an alpha subunit and a beta subunit. PSII is composed of 1 copy each of membrane proteins PsbA, PsbB, PsbC, PsbD, PsbE, PsbF, PsbH, PsbI, PsbJ, PsbK, PsbL, PsbM, PsbT, PsbX, PsbY, PsbZ, Psb30/Ycf12, at least 3 peripheral proteins of the oxygen-evolving complex and a large number of cofactors. It forms dimeric complexes. Requires heme b as cofactor.

It localises to the plastid. The protein resides in the chloroplast thylakoid membrane. In terms of biological role, this b-type cytochrome is tightly associated with the reaction center of photosystem II (PSII). PSII is a light-driven water:plastoquinone oxidoreductase that uses light energy to abstract electrons from H(2)O, generating O(2) and a proton gradient subsequently used for ATP formation. It consists of a core antenna complex that captures photons, and an electron transfer chain that converts photonic excitation into a charge separation. The polypeptide is Cytochrome b559 subunit beta (Nicotiana glutinosa (Tobacco)).